A 171-amino-acid chain; its full sequence is Co-chaperone protein HscB (171 aa).

The J domain occupies 2–74; the sequence is DYFTLFGLPA…LARAEYLLSL (73 aa).

This sequence belongs to the HscB family. As to quaternary structure, interacts with HscA and stimulates its ATPase activity. Interacts with IscU.

In terms of biological role, co-chaperone involved in the maturation of iron-sulfur cluster-containing proteins. Seems to help targeting proteins to be folded toward HscA. This is Co-chaperone protein HscB from Enterobacter sp. (strain 638).